Reading from the N-terminus, the 480-residue chain is Chromosomal replication initiator protein DnaA (480 aa).

Residues 1 to 71 (MKEFWQTCVS…EALAAEWYQR (71 aa)) form a domain I, interacts with DnaA modulators region. The domain II stretch occupies residues 71-142 (RPVQVTFELP…DAANIVYERS (72 aa)). The segment at 143 to 359 (RLNTDLTFEN…GALRKVLAYA (217 aa)) is domain III, AAA+ region. Positions 187, 189, 190, and 191 each coordinate ATP. The domain IV, binds dsDNA stretch occupies residues 360–480 (RFHGRDVLTV…LHVLEQTLKG (121 aa)).

It belongs to the DnaA family. As to quaternary structure, oligomerizes as a right-handed, spiral filament on DNA at oriC.

It localises to the cytoplasm. Functionally, plays an essential role in the initiation and regulation of chromosomal replication. ATP-DnaA binds to the origin of replication (oriC) to initiate formation of the DNA replication initiation complex once per cell cycle. Binds the DnaA box (a 9 base pair repeat at the origin) and separates the double-stranded (ds)DNA. Forms a right-handed helical filament on oriC DNA; dsDNA binds to the exterior of the filament while single-stranded (ss)DNA is stabiized in the filament's interior. The ATP-DnaA-oriC complex binds and stabilizes one strand of the AT-rich DNA unwinding element (DUE), permitting loading of DNA polymerase. After initiation quickly degrades to an ADP-DnaA complex that is not apt for DNA replication. Binds acidic phospholipids. The chain is Chromosomal replication initiator protein DnaA from Bordetella bronchiseptica (strain ATCC BAA-588 / NCTC 13252 / RB50) (Alcaligenes bronchisepticus).